The chain runs to 836 residues: Zinc fingers and homeoboxes protein 2 (836 aa).

Positions 24-58 (LEEADRAKDKGLGVPPSDVSKERWAAEPEPSSKES) are disordered. The tract at residues 27–77 (ADRAKDKGLGVPPSDVSKERWAAEPEPSSKESEVVEVRSVGESQSKKLQGG) is interaction with EFNB1. The segment covering 42 to 58 (VSKERWAAEPEPSSKES) has biased composition (basic and acidic residues). 2 C2H2-type zinc fingers span residues 78-101 (YECK…DMQH) and 110-133 (YVCA…SKFH). The segment at 168-210 (SAPGSSDNDPGVSVGKTATVKTGKQKADAKKVPKKPDEAAPDN) is disordered. Over residues 192 to 210 (QKADAKKVPKKPDEAAPDN) the composition is skewed to basic and acidic residues. The segment at 195 to 358 (DAKKVPKKPD…PAQLTPTKVS (164 aa)) is required for homodimerization. DNA-binding regions (homeobox) lie at residues 263 to 324 (NTTK…WSPE), 439 to 501 (TPAS…IVHI), 530 to 591 (AQKF…EQAV), and 628 to 690 (SPSS…TLSW). A required for repressor activity region spans residues 263–446 (NTTKYNSALD…PLTPASDRKK (184 aa)). The tract at residues 263–497 (NTTKYNSALD…SDHRYRCQRG (235 aa)) is required for interaction with NFYA. Residues 317-446 (HGISWSPEEV…PLTPASDRKK (130 aa)) form a required for nuclear localization region. The interval 404–442 (GQKRPLVTPQAAPEPKRPHIAQVPEPPPKVANTPLTPAS) is disordered. A Glycyl lysine isopeptide (Lys-Gly) (interchain with G-Cter in SUMO2) cross-link involves residue lysine 455. Basic and acidic residues-rich tracts occupy residues 700 to 709 (SDDHGHDVAS) and 730 to 746 (YAKD…EKLV). Residues 700–836 (SDDHGHDVAS…DSTPAEAGQA (137 aa)) form a disordered region. Phosphoserine occurs at positions 824 and 826.

Belongs to the ZHX family. Homodimer (via homeobox domain 1). Heterodimer with ZHX1 (via homeobox domain 1). Heterodimer with ZHX3 (via homeobox domain 1). Heterodimerization with ZHX1 is not necessary for repressor activity. Interacts (via homeobox domain) with NFYA (via N-terminus). Interacts with EFNB1 intracellular domain peptide; the interaction enhances ZHX2 transcriptional repression activity.

It is found in the nucleus. Its function is as follows. Acts as a transcriptional repressor. Represses the promoter activity of the CDC25C gene stimulated by NFYA. May play a role in retinal development where it regulates the composition of bipolar cell populations, by promoting differentiation of bipolar OFF-type cells. In the brain, may promote maintenance and suppress differentiation of neural progenitor cells in the developing cortex. The protein is Zinc fingers and homeoboxes protein 2 (Zhx2) of Rattus norvegicus (Rat).